Consider the following 75-residue polypeptide: Guanine nucleotide-binding protein G(I)/G(S)/G(O) subunit gamma-4 (75 aa).

Cys-72 is modified (cysteine methyl ester). The S-geranylgeranyl cysteine moiety is linked to residue Cys-72. Residues 73 to 75 (TIL) constitute a propeptide, removed in mature form.

Belongs to the G protein gamma family. As to quaternary structure, g proteins are composed of 3 units, alpha, beta and gamma. Interacts with beta-1 and beta-2, but not with beta-3. Interacts with KCNK1. Interacts (via C-terminus) with KCNK2/TREK-1 (via N-terminus); this interaction confers ion selectivity to Cl(-) and L-glutamate. As to expression, brain.

Its subcellular location is the cell membrane. Functionally, guanine nucleotide-binding proteins (G proteins) are involved as a modulator or transducer in various transmembrane signaling systems. The beta and gamma chains are required for the GTPase activity, for replacement of GDP by GTP, and for G protein-effector interaction. This is Guanine nucleotide-binding protein G(I)/G(S)/G(O) subunit gamma-4 (Gng4) from Mus musculus (Mouse).